A 33-amino-acid polypeptide reads, in one-letter code: Cytochrome b6-f complex subunit 8 (33 aa).

Residues Leu2–Val22 form a helical membrane-spanning segment.

It belongs to the PetN family. In terms of assembly, the 4 large subunits of the cytochrome b6-f complex are cytochrome b6, subunit IV (17 kDa polypeptide, PetD), cytochrome f and the Rieske protein, while the 4 small subunits are PetG, PetL, PetM and PetN. The complex functions as a dimer.

Its subcellular location is the cellular thylakoid membrane. Component of the cytochrome b6-f complex, which mediates electron transfer between photosystem II (PSII) and photosystem I (PSI), cyclic electron flow around PSI, and state transitions. This chain is Cytochrome b6-f complex subunit 8, found in Prochlorococcus marinus (strain SARG / CCMP1375 / SS120).